We begin with the raw amino-acid sequence, 200 residues long: Pyridoxal 5'-phosphate synthase subunit PdxT (200 aa).

Residue 52 to 54 (GES) participates in L-glutamine binding. Residue Cys84 is the Nucleophile of the active site. Residues Arg116 and 145–146 (IR) each bind L-glutamine. Residues His181 and Glu183 each act as charge relay system in the active site.

Belongs to the glutaminase PdxT/SNO family. In the presence of PdxS, forms a dodecamer of heterodimers. Only shows activity in the heterodimer.

It catalyses the reaction aldehydo-D-ribose 5-phosphate + D-glyceraldehyde 3-phosphate + L-glutamine = pyridoxal 5'-phosphate + L-glutamate + phosphate + 3 H2O + H(+). It carries out the reaction L-glutamine + H2O = L-glutamate + NH4(+). It participates in cofactor biosynthesis; pyridoxal 5'-phosphate biosynthesis. Its function is as follows. Catalyzes the hydrolysis of glutamine to glutamate and ammonia as part of the biosynthesis of pyridoxal 5'-phosphate. The resulting ammonia molecule is channeled to the active site of PdxS. The polypeptide is Pyridoxal 5'-phosphate synthase subunit PdxT (Sulfurisphaera tokodaii (strain DSM 16993 / JCM 10545 / NBRC 100140 / 7) (Sulfolobus tokodaii)).